Reading from the N-terminus, the 428-residue chain is Enolase (428 aa).

Residue Gln163 participates in (2R)-2-phosphoglycerate binding. Residue Glu205 is the Proton donor of the active site. The Mg(2+) site is built by Asp242, Glu285, and Asp312. Residues Lys337, Arg366, Ser367, and Lys388 each contribute to the (2R)-2-phosphoglycerate site. The active-site Proton acceptor is the Lys337.

Belongs to the enolase family. The cofactor is Mg(2+).

It localises to the cytoplasm. The protein localises to the secreted. Its subcellular location is the cell surface. It catalyses the reaction (2R)-2-phosphoglycerate = phosphoenolpyruvate + H2O. It participates in carbohydrate degradation; glycolysis; pyruvate from D-glyceraldehyde 3-phosphate: step 4/5. Its function is as follows. Catalyzes the reversible conversion of 2-phosphoglycerate (2-PG) into phosphoenolpyruvate (PEP). It is essential for the degradation of carbohydrates via glycolysis. This Nitrosomonas europaea (strain ATCC 19718 / CIP 103999 / KCTC 2705 / NBRC 14298) protein is Enolase.